The sequence spans 343 residues: Retroviral-like aspartic protease 1 (343 aa).

Residues 1 to 55 lie on the Cytoplasmic side of the membrane; the sequence is MGSPGASLGIKKALQSEQATALPASAPAVSQPTAPAPSCLPKAGQVIPTLLREAP. Positions 1-190 are excised as a propeptide; that stretch reads MGSPGASLGI…HLPKEIVFAN (190 aa). Residues 56-76 form a helical membrane-spanning segment; sequence FSSVIAPTLLCGFLFLAWVAA. The Extracellular portion of the chain corresponds to 77–343; that stretch reads EVPEESSRMA…SEEGRQELSH (267 aa). The Peptidase A2 domain occupies 207–288; sequence VRFLVDSGAQ…AEEAIIGTDV (82 aa). Asp-212 is an active-site residue. The N-linked (GlcNAc...) asparagine glycan is linked to Asn-276. A propeptide spanning residues 327 to 343 is cleaved from the precursor; sequence LIEEDPSSEEGRQELSH.

As to quaternary structure, homodimer. Post-translationally, undergoes autocleavage which is necessary for activation of the protein. Expressed primarily in the granular layer of the epidermis and inner root sheath of hair follicles. In psoriatic skin, expressed throughout the stratum corneum. In ulcerated skin, expressed in the stratum granulosum of intact epidermis but almost absent from ulcerated regions. Expressed in differentiated areas of squamous cell carcinomas but not in undifferentiated tumors.

Its subcellular location is the membrane. Protease responsible for filaggrin processing, essential for the maintenance of a proper epidermis organization. The protein is Retroviral-like aspartic protease 1 of Homo sapiens (Human).